A 141-amino-acid polypeptide reads, in one-letter code: Hemoglobin subunit alpha-D (141 aa).

One can recognise a Globin domain in the interval Met1 to Arg141. Heme b contacts are provided by His58 and His87.

Belongs to the globin family. In terms of assembly, heterotetramer of two alpha-D chains and two beta chains. Red blood cells.

Functionally, involved in oxygen transport from the lung to the various peripheral tissues. This chain is Hemoglobin subunit alpha-D (HBAD), found in Chloephaga melanoptera (Andean goose).